We begin with the raw amino-acid sequence, 720 residues long: MRSAFYVAIVLLVAAGSQTAAKCDQDEPQHAPSNNFMASFDRVDQMLPSQVLQASRNLKDDFMFSAGDEERTPLAPSKLLKKVKFPDSVISTASAMRTTEDVNAIEIASKNLNQLRSNKRQRIVQTPNKMAGQAVVTPPALDIPLVSVANEKSLKLPKRRTRKRPTAVVENAARSVPQHDYHSAPQDSFKINAEAPNARLYNQLITQKALQLEKNEHLEKNAREEELVSFDLLHLFEKSAHPAAGNRQEANAIKVASKNLIQLESNTRKRNNVVGQVKRKRPNRDRSPVSVANGKPLGLAKRRKSNHPTAVAKNAASSVKQHDHRVAPPEPSRLDAKALDGRINNQQITQKASQLDKNEHVDKRSWREELVSVDELMHLFDEFDKSAHPTTVSRQETSAIEATSKSLIPAESSTHKGIALTSNDVVEVGVHAPPDPDKFLVLVADNMPMILAERLKTTSPTAIMNNAARFVTQHYERLAHLESSTTNAEALSGRLINQPITQKALQLDKSQHVDDVEDIEKQFSRAVGHFWHLREVNDKSAHTTAVYRQTVPDDWNAEYAKGPKTLSQDGKINNDVKEVHAAFLEAFNLPFHQYPQETAIMLKIVQRKNKSSPNNFRTFKTFKLLAQNQMILSHLQELLAPDLKKLLGYGNMALPITLKNLKEALNVKLVIMYDLFIIFCHERVDLVKDLPPKPTPSQWIFEISTLSSGNKNRQVLPPHD.

The signal sequence occupies residues 1 to 20; sequence MRSAFYVAIVLLVAAGSQTA. A RxLR-dEER motif is present at residues 56–71; the sequence is RNLKDDFMFSAGDEER. A disordered region spans residues 264 to 335; it reads ESNTRKRNNV…VAPPEPSRLD (72 aa). Residues 320–335 show a composition bias toward basic and acidic residues; it reads KQHDHRVAPPEPSRLD. N-linked (GlcNAc...) asparagine glycosylation occurs at N609.

This sequence belongs to the RxLR effector family.

It is found in the secreted. The protein resides in the host nucleus. In terms of biological role, secreted effector that acts as an elicitor that induces cell death in host plant cells. This Plasmopara viticola (Downy mildew of grapevine) protein is Secreted RxLR effector protein 138.